The chain runs to 54 residues: Ovomucoid (54 aa).

One can recognise a Kazal-like domain in the interval 4-54 (VDCSDYPTHGCTLELKPICGSDNQTYSNKCGFCNAVAQSNGTLTLSHFGKC). Cystine bridges form between C6–C36, C14–C33, and C22–C54. N-linked (GlcNAc...) asparagine glycosylation is present at N43.

The protein resides in the secreted. The chain is Ovomucoid from Aepypodius arfakianus (Wattled brush turkey).